The following is a 350-amino-acid chain: Protein pelota homolog (350 aa).

Belongs to the eukaryotic release factor 1 family. Pelota subfamily. In terms of assembly, monomer. The cofactor is a divalent metal cation.

The protein resides in the cytoplasm. Its function is as follows. May function in recognizing stalled ribosomes, interact with stem-loop structures in stalled mRNA molecules, and effect endonucleolytic cleavage of the mRNA. May play a role in the release non-functional ribosomes and degradation of damaged mRNAs. Has endoribonuclease activity. In Methanosarcina mazei (strain ATCC BAA-159 / DSM 3647 / Goe1 / Go1 / JCM 11833 / OCM 88) (Methanosarcina frisia), this protein is Protein pelota homolog.